A 188-amino-acid chain; its full sequence is Pro-FMRFamide-related neuropeptide VF (188 aa).

A signal peptide spans 1-26 (MEIISLKRFILLTVATSSFLTSNTFC). A propeptide spanning residues 27–57 (TDEFMMPHFHSKEGDGKYSQLRGIPKGEKER) is cleaved from the precursor. Phe94 carries the post-translational modification Phenylalanine amide. Positions 97–106 (TIDEKRSPAA) are excised as a propeptide. Disordered regions lie at residues 116-144 (SHFPSLPQRFGRTTARSPKTPADLPQKPL) and 163-188 (IQSPGGKRTRRGAFVETDDAERKPEK). Phe125 is modified (phenylalanine amide). Positions 128-188 (TTARSPKTPA…TDDAERKPEK (61 aa)) are excised as a propeptide.

Belongs to the FARP (FMRFamide related peptide) family.

The protein localises to the secreted. Functionally, efficiently inhibits forskolin-induced production of cAMP. Acts as a potent negative regulator of gonadotropin synthesis and secretion. Induces secretion of prolactin. In terms of biological role, efficiently inhibits forskolin-induced production of cAMP. Blocks morphine-induced analgesia. In Mus musculus (Mouse), this protein is Pro-FMRFamide-related neuropeptide VF (Npvf).